Reading from the N-terminus, the 342-residue chain is Anthranilate phosphoribosyltransferase (342 aa).

Residues G79, 82–83 (GD), T87, 89–92 (NIST), 107–115 (KHCNQRISS), and S119 each bind 5-phospho-alpha-D-ribose 1-diphosphate. Anthranilate is bound at residue G79. S91 provides a ligand contact to Mg(2+). N110 serves as a coordination point for anthranilate. R165 contacts anthranilate. Residues D223 and E224 each contribute to the Mg(2+) site.

Belongs to the anthranilate phosphoribosyltransferase family. Homodimer. The cofactor is Mg(2+).

The catalysed reaction is N-(5-phospho-beta-D-ribosyl)anthranilate + diphosphate = 5-phospho-alpha-D-ribose 1-diphosphate + anthranilate. Its pathway is amino-acid biosynthesis; L-tryptophan biosynthesis; L-tryptophan from chorismate: step 2/5. Its function is as follows. Catalyzes the transfer of the phosphoribosyl group of 5-phosphorylribose-1-pyrophosphate (PRPP) to anthranilate to yield N-(5'-phosphoribosyl)-anthranilate (PRA). This chain is Anthranilate phosphoribosyltransferase, found in Buchnera aphidicola subsp. Acyrthosiphon pisum (strain 5A).